The sequence spans 419 residues: Tyrosine--tRNA ligase (419 aa).

Tyrosine 34 is a binding site for L-tyrosine. The short motif at 39–48 (PTADSLHIGN) is the 'HIGH' region element. Tyrosine 169 and glutamine 173 together coordinate L-tyrosine. The short motif at 230–234 (KFGKT) is the 'KMSKS' region element. ATP is bound at residue lysine 233. In terms of domain architecture, S4 RNA-binding spans 352-419 (VPLVELLVSA…KKKYYLIRYA (68 aa)).

Belongs to the class-I aminoacyl-tRNA synthetase family. TyrS type 1 subfamily. Homodimer.

The protein localises to the cytoplasm. It catalyses the reaction tRNA(Tyr) + L-tyrosine + ATP = L-tyrosyl-tRNA(Tyr) + AMP + diphosphate + H(+). In terms of biological role, catalyzes the attachment of tyrosine to tRNA(Tyr) in a two-step reaction: tyrosine is first activated by ATP to form Tyr-AMP and then transferred to the acceptor end of tRNA(Tyr). This chain is Tyrosine--tRNA ligase, found in Bacillus caldotenax.